Here is a 349-residue protein sequence, read N- to C-terminus: Interferon-stimulated 20 kDa exonuclease-like 2 (349 aa).

Disordered regions lie at residues 1–100 (MSTL…AAVP) and 126–166 (ALPK…KYSG). Basic and acidic residues predominate over residues 14-23 (PPKKALEGNA). The span at 24-47 (KHRKFVKKRRLLERKGFLNKKKQP) shows a compositional bias: basic residues. Over residues 54 to 66 (LHSEPSQKGETPR) the composition is skewed to basic and acidic residues. Residues 70–87 (TWKATPLPKKKTTAASSS) show a composition bias toward low complexity. Over residues 130 to 142 (IKSHPTRPQKKGS) the composition is skewed to basic residues. One can recognise an Exonuclease domain in the interval 175–331 (MVAIDCEMVG…EDAQATMELY (157 aa)).

It is found in the nucleus. It localises to the nucleolus. Its function is as follows. 3'-&gt; 5'-exoribonuclease involved in ribosome biogenesis in the processing of the 12S pre-rRNA. Displays a strong specificity for a 3'-end containing a free hydroxyl group. This chain is Interferon-stimulated 20 kDa exonuclease-like 2 (ISG20L2), found in Bos taurus (Bovine).